Reading from the N-terminus, the 34-residue chain is Potassium channel toxin alpha-KTx 6.13 (34 aa).

Intrachain disulfides connect Cys-3–Cys-24, Cys-9–Cys-29, Cys-13–Cys-31, and Cys-19–Cys-34. Cys-34 carries the cysteine amide modification.

It belongs to the short scorpion toxin superfamily. Potassium channel inhibitor family. Alpha-KTx 06 subfamily. In terms of tissue distribution, expressed by the venom gland.

It is found in the secreted. Its function is as follows. Antagonist of Kv1/KCNA potassium channels. Shows a weak interaction with muscle-type nicotinic acetylcholine receptors (nAChR), since it inhibits alpha-bungarotoxin binding to both muscle-type nAChR from T.californica (IC(50)=490 nM). This suggests it probably weakly inhibits nAChR. This chain is Potassium channel toxin alpha-KTx 6.13, found in Heterometrus spinifer (Asia giant forest scorpion).